A 118-amino-acid chain; its full sequence is Large ribosomal subunit protein bL20 (118 aa).

The protein belongs to the bacterial ribosomal protein bL20 family.

Its function is as follows. Binds directly to 23S ribosomal RNA and is necessary for the in vitro assembly process of the 50S ribosomal subunit. It is not involved in the protein synthesizing functions of that subunit. In Bacillus cytotoxicus (strain DSM 22905 / CIP 110041 / 391-98 / NVH 391-98), this protein is Large ribosomal subunit protein bL20.